The following is a 445-amino-acid chain: MAIKIRKLDSAGEGFAAELRAVLAFEASEDDAIERAVAQILADVKARGDAAVLDYTNRFDRLNAASVAALELPQSELEAALEGLEPKRRAALEAAAARVRGYHEKQKIECGSHSWQYTEADGTVLGQKVTPLDRVGLYVPGGKAAYPSSVLMNAIPARVAGVGEIVMVVPTPDGLKNDLVLAAALLGGVDRVFTIGGAQAVAALAYGTQTVPAVDKICGPGNAYVASAKRRVFGTVGIDMIAGPSEILVLCDGTTDPSWVAMDLFSQAEHDELAQSILLCPDEAFIERVEKAIGELLPTMPRQDVIRASLEGRGALVKVRDMAEACRIANDIAPEHLEISALEPHQWGKQIRHAGAIFLGRYTSESLGDYCAGPNHVLPTSRTARFSSPLGVYDFFKRSSLIEVSAEGAHTLGEIASELAYGEGLQAHAKSAEYRMKGAGDRQKG.

NAD(+) contacts are provided by Y138, Q199, and N222. S245, Q267, and H270 together coordinate substrate. Residues Q267 and H270 each coordinate Zn(2+). Active-site proton acceptor residues include E335 and H336. H336, D369, E423, and H428 together coordinate substrate. Position 369 (D369) interacts with Zn(2+). H428 contacts Zn(2+).

It belongs to the histidinol dehydrogenase family. The cofactor is Zn(2+).

The catalysed reaction is L-histidinol + 2 NAD(+) + H2O = L-histidine + 2 NADH + 3 H(+). The protein operates within amino-acid biosynthesis; L-histidine biosynthesis; L-histidine from 5-phospho-alpha-D-ribose 1-diphosphate: step 9/9. Functionally, catalyzes the sequential NAD-dependent oxidations of L-histidinol to L-histidinaldehyde and then to L-histidine. The polypeptide is Histidinol dehydrogenase (Burkholderia mallei (strain ATCC 23344)).